Consider the following 173-residue polypeptide: MQAPPVKEGPRMNEDIRVPRVLLIDQHGEKQGVMPTSAAIEAAEEAGLDLVEIVPNADPPVCKILDYGKFKFQEQKKKNEARKKQKVVELKEIKLRPNIDQHDYEVKARSMHRFFEEGDKVKITLRFRGRELAHPELGMKLLQKVKVDFEEVAKVEYEPRMEGRQMIMILAPR.

Belongs to the IF-3 family. Monomer.

It is found in the cytoplasm. In terms of biological role, IF-3 binds to the 30S ribosomal subunit and shifts the equilibrium between 70S ribosomes and their 50S and 30S subunits in favor of the free subunits, thus enhancing the availability of 30S subunits on which protein synthesis initiation begins. The protein is Translation initiation factor IF-3 of Phenylobacterium zucineum (strain HLK1).